The sequence spans 238 residues: ATP synthase subunit a (238 aa).

A run of 5 helical transmembrane segments spans residues 18–38, 76–96, 117–137, 173–193, and 208–230; these read GTTMITTTIAMAIVVIITVIG, FIVLAYALLFYVFVANMMGIP, VLTLTMAVFIVVLTHIYGIMV, LFGNIYAKEILMLLLVSLGTT, and WQAFSIFIGSLQAYIFAMLAMVY.

The protein belongs to the ATPase A chain family. F-type ATPases have 2 components, CF(1) - the catalytic core - and CF(0) - the membrane proton channel. CF(1) has five subunits: alpha(3), beta(3), gamma(1), delta(1), epsilon(1). CF(0) has three main subunits: a(1), b(2) and c(9-12). The alpha and beta chains form an alternating ring which encloses part of the gamma chain. CF(1) is attached to CF(0) by a central stalk formed by the gamma and epsilon chains, while a peripheral stalk is formed by the delta and b chains.

Its subcellular location is the cell membrane. Key component of the proton channel; it plays a direct role in the translocation of protons across the membrane. The sequence is that of ATP synthase subunit a from Shouchella clausii (strain KSM-K16) (Alkalihalobacillus clausii).